The chain runs to 490 residues: GTPase Der (490 aa).

EngA-type G domains are found at residues 1–165 (MRIA…QIPV) and 227–400 (LKVA…TIAT). Residues 7–14 (GRPNVGKS), 54–58 (DTGGV), 117–120 (NKAD), 233–240 (GHPNVGKS), 280–284 (DTAGL), and 345–348 (NKWD) each bind GTP. One can recognise a KH-like domain in the interval 401-485 (TKLSTSLVNK…PFDLEYKAKP (85 aa)).

Belongs to the TRAFAC class TrmE-Era-EngA-EngB-Septin-like GTPase superfamily. EngA (Der) GTPase family. As to quaternary structure, associates with the 50S ribosomal subunit.

In terms of biological role, GTPase that plays an essential role in the late steps of ribosome biogenesis. This Chlamydia trachomatis serovar A (strain ATCC VR-571B / DSM 19440 / HAR-13) protein is GTPase Der.